Reading from the N-terminus, the 954-residue chain is Glycine dehydrogenase (decarboxylating) (954 aa).

The residue at position 702 (lysine 702) is an N6-(pyridoxal phosphate)lysine.

Belongs to the GcvP family. As to quaternary structure, the glycine cleavage system is composed of four proteins: P, T, L and H. Pyridoxal 5'-phosphate is required as a cofactor.

The enzyme catalyses N(6)-[(R)-lipoyl]-L-lysyl-[glycine-cleavage complex H protein] + glycine + H(+) = N(6)-[(R)-S(8)-aminomethyldihydrolipoyl]-L-lysyl-[glycine-cleavage complex H protein] + CO2. Its function is as follows. The glycine cleavage system catalyzes the degradation of glycine. The P protein binds the alpha-amino group of glycine through its pyridoxal phosphate cofactor; CO(2) is released and the remaining methylamine moiety is then transferred to the lipoamide cofactor of the H protein. The sequence is that of Glycine dehydrogenase (decarboxylating) from Xanthomonas euvesicatoria pv. vesicatoria (strain 85-10) (Xanthomonas campestris pv. vesicatoria).